We begin with the raw amino-acid sequence, 329 residues long: DNA-directed RNA polymerase subunit alpha (329 aa).

Positions 1–234 are alpha N-terminal domain (alpha-NTD); it reads MQGSVTEFLR…EQLDAFVELR (234 aa). Residues 248-329 form an alpha C-terminal domain (alpha-CTD) region; that stretch reads FDPILLRPVD…WPPASLVDDL (82 aa).

The protein belongs to the RNA polymerase alpha chain family. As to quaternary structure, homodimer. The RNAP catalytic core consists of 2 alpha, 1 beta, 1 beta' and 1 omega subunit. When a sigma factor is associated with the core the holoenzyme is formed, which can initiate transcription.

The catalysed reaction is RNA(n) + a ribonucleoside 5'-triphosphate = RNA(n+1) + diphosphate. DNA-dependent RNA polymerase catalyzes the transcription of DNA into RNA using the four ribonucleoside triphosphates as substrates. In Shewanella violacea (strain JCM 10179 / CIP 106290 / LMG 19151 / DSS12), this protein is DNA-directed RNA polymerase subunit alpha.